The chain runs to 231 residues: Trypsin (231 aa).

A propeptide spans 1–8 (FPTDDDDK) (activation peptide). The region spanning 9–229 (IVGGYTCAAN…YVNWIQQTIA (221 aa)) is the Peptidase S1 domain. Disulfide bonds link cysteine 15/cysteine 145, cysteine 33/cysteine 49, cysteine 117/cysteine 218, cysteine 124/cysteine 191, cysteine 156/cysteine 170, and cysteine 181/cysteine 205. Histidine 48 acts as the Charge relay system in catalysis. Glutamate 60, asparagine 62, valine 65, and glutamate 70 together coordinate Ca(2+). Residue aspartate 92 is the Charge relay system of the active site. Residue serine 185 is the Charge relay system of the active site.

It belongs to the peptidase S1 family. Requires Ca(2+) as cofactor.

The protein localises to the secreted. The protein resides in the extracellular space. It carries out the reaction Preferential cleavage: Arg-|-Xaa, Lys-|-Xaa.. The polypeptide is Trypsin (Sus scrofa (Pig)).